The chain runs to 1039 residues: Antigen 43 (1039 aa).

The first 52 residues, 1 to 52 (MKRHLNTCYRLVWNHMTGAFVVASELARARGKRGGVAVALSLAAVTSLPVLA), serve as a signal peptide directing secretion. Positions 737-1039 (VNGENNSVRL…NGQATLNVTF (303 aa)) constitute an Autotransporter domain.

In terms of assembly, interaction with TamA of the translocation and assembly module (TAM) initiates insertion in the outer membrane.

It localises to the periplasm. It is found in the secreted. Its subcellular location is the cell surface. The protein localises to the cell outer membrane. Its function is as follows. Controls colony form variation and autoaggregation. May function as an adhesin. The chain is Antigen 43 (flu) from Escherichia coli (strain K12).